Reading from the N-terminus, the 393-residue chain is Serine/threonine-protein phosphatase 2A activator 1 (393 aa).

A disordered region spans residues 328–393 (EKEEESIEQA…TSFSRDRLRR (66 aa)). Polar residues-rich tracts occupy residues 335–356 (EQAN…TSTS) and 365–386 (SGNN…QTSF). The residue at position 341 (S341) is a Phosphoserine.

The protein belongs to the PTPA-type PPIase family. Interacts with the phosphatase PP2A-like catalytic subunits PPG1, PPH3 and SIT4. Forms a ternary complex with SIT4-TAP42.

It localises to the cytoplasm. It is found in the nucleus. The catalysed reaction is [protein]-peptidylproline (omega=180) = [protein]-peptidylproline (omega=0). In terms of biological role, PPIases accelerate the folding of proteins. It catalyzes the cis-trans isomerization of proline imidic peptide bonds in oligopeptides. Acts as a regulatory subunit for TAP42-associated PP2A-like phosphatases modulating their activity or substrate specificity, probably by inducing a conformational change in the catalytic subunit, a direct target of the PPIase. Can reactivate inactive phosphatase PP2A-phosphatase methylesterase complexes (PP2Ai) in presence of ATP and Mg(2+) by dissociating the inactive form from the complex. Involved in the regulation of cell cycle progression, mitotic spindle formation, bud morphogenesis and DNA repair. This Saccharomyces cerevisiae (strain ATCC 204508 / S288c) (Baker's yeast) protein is Serine/threonine-protein phosphatase 2A activator 1 (RRD1).